The chain runs to 691 residues: F-box/LRR-repeat protein 5 (691 aa).

Residues 1–159 are hemerythrin-like; the sequence is MAPFPEEVDV…IKKKVIAQHC (159 aa). Residues His-15, His-57, Glu-58, Glu-61, His-80, His-126, and Glu-130 each coordinate Fe(3+). In terms of domain architecture, F-box spans 202 to 248; it reads STGITHLPPEVMLSIFSYLNPQELCRCSQVSMKWSQLTKTGSLWKHL. LRR repeat units follow at residues 340 to 364, 365 to 392, 393 to 418, 479 to 508, 576 to 607, 608 to 635, and 636 to 661; these read SSAV…LDLT, QTDI…DLSG, CEKI…QSGF, LWML…CVVE, TRLP…SLSG, CYQI…NLSG, and CLTI…YFYY. [2Fe-2S] cluster contacts are provided by Cys-662, Cys-676, Cys-686, and Cys-687.

Part of a SCF (SKP1-cullin-F-box) protein ligase complex. Interacts with ACO1/IRP1, IREB2/IRP2; the interaction depends on the [2Fe-2S] cluster. Interacts with DCTN1/p150-glued. [2Fe-2S] cluster is required as a cofactor. Post-translationally, polybiquitinated upon iron and oxygen depletion, leading to its degradation by the proteasome. Ubiquitination is regulated by the hemerythrin-like region that acts as an oxygen and iron sensor. Undergoes constitutive ubiquitin-dependent degradation at the steady state by HERC2.

It is found in the cytoplasm. The protein resides in the perinuclear region. It localises to the nucleus. Its pathway is protein modification; protein ubiquitination. An iron-sulfur cluster promotes IRP2 polyubiquitination and degradation in response to both iron and oxygen concentrations. Its function is as follows. Component of some SCF (SKP1-cullin-F-box) protein ligase complex that plays a central role in iron homeostasis by promoting the ubiquitination and subsequent degradation of IREB2/IRP2. The C-terminal domain of FBXL5 contains a redox-sensitive [2Fe-2S] cluster that, upon oxidation, promotes binding to IRP2 to effect its oxygen-dependent degradation. Under iron deficiency conditions, the N-terminal hemerythrin-like (Hr) region, which contains a diiron metal center, cannot bind iron and undergoes conformational changes that destabilize the FBXL5 protein and cause its ubiquitination and degradation. When intracellular iron levels start rising, the Hr region is stabilized. Additional increases in iron levels facilitate the assembly and incorporation of a redox active [2Fe-2S] cluster in the C-terminal domain. Only when oxygen level is high enough to maintain the cluster in its oxidized state can FBXL5 recruit IRP2 as a substrate for polyubiquination and degradation. Promotes ubiquitination and subsequent degradation of the dynactin complex component DCTN1. Within the nucleus, promotes the ubiquitination of SNAI1; preventing its interaction with DNA and promoting its degradation. Negatively regulates DNA damage response by mediating the ubiquitin-proteasome degradation of the DNA repair protein NABP2. The sequence is that of F-box/LRR-repeat protein 5 (FBXL5) from Pongo abelii (Sumatran orangutan).